The sequence spans 356 residues: Protein RecA (356 aa).

77 to 84 provides a ligand contact to ATP; sequence GPESSGKT.

This sequence belongs to the RecA family.

The protein resides in the cytoplasm. Can catalyze the hydrolysis of ATP in the presence of single-stranded DNA, the ATP-dependent uptake of single-stranded DNA by duplex DNA, and the ATP-dependent hybridization of homologous single-stranded DNAs. It interacts with LexA causing its activation and leading to its autocatalytic cleavage. In Caulobacter sp. (strain K31), this protein is Protein RecA.